The sequence spans 147 residues: Hemoglobin subunit beta (147 aa).

The residue at position 2 (Val-2) is an N-acetylvaline. The Globin domain occupies 3-147; sequence HLTPEEKSAV…VANALAHKYH (145 aa). At Thr-13 the chain carries Phosphothreonine. Ser-45 carries the post-translational modification Phosphoserine. An N6-acetyllysine modification is found at Lys-60. Residue His-64 participates in heme b binding. Lys-83 carries the post-translational modification N6-acetyllysine. Residue His-93 participates in heme b binding. Residue Cys-94 is modified to S-nitrosocysteine. The residue at position 145 (Lys-145) is an N6-acetyllysine.

It belongs to the globin family. As to quaternary structure, heterotetramer of two alpha chains and two beta chains in adult hemoglobin A (HbA). As to expression, red blood cells.

Involved in oxygen transport from the lung to the various peripheral tissues. The chain is Hemoglobin subunit beta (HBB) from Pan paniscus (Pygmy chimpanzee).